The sequence spans 338 residues: Holliday junction branch migration complex subunit RuvB (338 aa).

Residues 1-181 are large ATPase domain (RuvB-L); the sequence is MEERILTQNF…FGVINRLDYY (181 aa). Residues Leu-20, Arg-21, Gly-62, Lys-65, Thr-66, Thr-67, 128–130, Arg-171, Tyr-181, and Arg-218 contribute to the ATP site; that span reads EDF. Thr-66 contacts Mg(2+). Residues 182–252 are small ATPAse domain (RuvB-S); sequence SVEELKEIIK…TSKEALDVLG (71 aa). The segment at 255 to 338 is head domain (RuvB-H); sequence EIGLEYIDRK…YIEQGRIEGV (84 aa). The DNA site is built by Arg-310 and Arg-315.

It belongs to the RuvB family. In terms of assembly, homohexamer. Forms an RuvA(8)-RuvB(12)-Holliday junction (HJ) complex. HJ DNA is sandwiched between 2 RuvA tetramers; dsDNA enters through RuvA and exits via RuvB. An RuvB hexamer assembles on each DNA strand where it exits the tetramer. Each RuvB hexamer is contacted by two RuvA subunits (via domain III) on 2 adjacent RuvB subunits; this complex drives branch migration. In the full resolvosome a probable DNA-RuvA(4)-RuvB(12)-RuvC(2) complex forms which resolves the HJ.

The protein resides in the cytoplasm. It carries out the reaction ATP + H2O = ADP + phosphate + H(+). Its function is as follows. The RuvA-RuvB-RuvC complex processes Holliday junction (HJ) DNA during genetic recombination and DNA repair, while the RuvA-RuvB complex plays an important role in the rescue of blocked DNA replication forks via replication fork reversal (RFR). RuvA specifically binds to HJ cruciform DNA, conferring on it an open structure. The RuvB hexamer acts as an ATP-dependent pump, pulling dsDNA into and through the RuvAB complex. RuvB forms 2 homohexamers on either side of HJ DNA bound by 1 or 2 RuvA tetramers; 4 subunits per hexamer contact DNA at a time. Coordinated motions by a converter formed by DNA-disengaged RuvB subunits stimulates ATP hydrolysis and nucleotide exchange. Immobilization of the converter enables RuvB to convert the ATP-contained energy into a lever motion, pulling 2 nucleotides of DNA out of the RuvA tetramer per ATP hydrolyzed, thus driving DNA branch migration. The RuvB motors rotate together with the DNA substrate, which together with the progressing nucleotide cycle form the mechanistic basis for DNA recombination by continuous HJ branch migration. Branch migration allows RuvC to scan DNA until it finds its consensus sequence, where it cleaves and resolves cruciform DNA. The sequence is that of Holliday junction branch migration complex subunit RuvB from Thermoanaerobacter pseudethanolicus (strain ATCC 33223 / 39E) (Clostridium thermohydrosulfuricum).